The sequence spans 89 residues: Small ribosomal subunit protein uS15 (89 aa).

Belongs to the universal ribosomal protein uS15 family. Part of the 30S ribosomal subunit. Forms a bridge to the 50S subunit in the 70S ribosome, contacting the 23S rRNA.

In terms of biological role, one of the primary rRNA binding proteins, it binds directly to 16S rRNA where it helps nucleate assembly of the platform of the 30S subunit by binding and bridging several RNA helices of the 16S rRNA. Its function is as follows. Forms an intersubunit bridge (bridge B4) with the 23S rRNA of the 50S subunit in the ribosome. This Methylorubrum extorquens (strain CM4 / NCIMB 13688) (Methylobacterium extorquens) protein is Small ribosomal subunit protein uS15.